Consider the following 368-residue polypeptide: S-adenosylmethionine decarboxylase proenzyme (368 aa).

Residues glutamate 26 and glutamate 29 contribute to the active site. Serine 83 acts as the Schiff-base intermediate with substrate; via pyruvic acid in catalysis. Serine 83 bears the Pyruvic acid (Ser); by autocatalysis mark. The active-site Proton donor; for catalytic activity is the cysteine 97. Active-site proton acceptor; for processing activity residues include serine 246 and histidine 261.

It belongs to the eukaryotic AdoMetDC family. As to quaternary structure, heterotetramer of two alpha and two beta chains. Requires pyruvate as cofactor. Post-translationally, is synthesized initially as an inactive proenzyme. Formation of the active enzyme involves a self-maturation process in which the active site pyruvoyl group is generated from an internal serine residue via an autocatalytic post-translational modification. Two non-identical subunits are generated from the proenzyme in this reaction, and the pyruvate is formed at the N-terminus of the alpha chain, which is derived from the carboxyl end of the proenzyme. The post-translation cleavage follows an unusual pathway, termed non-hydrolytic serinolysis, in which the side chain hydroxyl group of the serine supplies its oxygen atom to form the C-terminus of the beta chain, while the remainder of the serine residue undergoes an oxidative deamination to produce ammonia and the pyruvoyl group blocking the N-terminus of the alpha chain.

The enzyme catalyses S-adenosyl-L-methionine + H(+) = S-adenosyl 3-(methylsulfanyl)propylamine + CO2. The protein operates within amine and polyamine biosynthesis; S-adenosylmethioninamine biosynthesis; S-adenosylmethioninamine from S-adenosyl-L-methionine: step 1/1. Functionally, essential for biosynthesis of the polyamines spermidine and spermine. Polyamines are essential for cell proliferation and are implicated in cellular processes, ranging from DNA replication to apoptosis. The protein is S-adenosylmethionine decarboxylase proenzyme of Caenorhabditis elegans.